The following is a 655-amino-acid chain: p-hydroxybenzoic acid efflux pump subunit AaeB (655 aa).

Residues 1–12 (MGIFSIANQHIR) lie on the Periplasmic side of the membrane. Residues 13–33 (FAVKLATAIVLALFVGFHFQL) traverse the membrane as a helical segment. Over 34–37 (ETPR) the chain is Cytoplasmic. A helical membrane pass occupies residues 38–58 (WAVLTAAIVAAGPAFAAGGEP). Over 59–68 (YSGAIRYRGF) the chain is Periplasmic. Residues 69-89 (LRIIGTFIGCIAGLVIIIAMI) form a helical membrane-spanning segment. Topologically, residues 90–92 (RAP) are cytoplasmic. A helical membrane pass occupies residues 93–113 (LLMILVCCIWAGFCTWISSLV). The Periplasmic segment spans residues 114–120 (RIENSYA). The chain crosses the membrane as a helical span at residues 121–141 (WGLAGYTALIIVITIQPEPLL). Residues 142 to 151 (TPQFAVERCS) are Cytoplasmic-facing. Residues 152 to 172 (EIVIGIVCAIMADLLFSPRSI) traverse the membrane as a helical segment. The Periplasmic portion of the chain corresponds to 173-369 (KQEVDRELES…RTTLSCILGT (197 aa)). Residues 370 to 390 (LFWLWTGWTSGSGAMVMIAVV) form a helical membrane-spanning segment. The Cytoplasmic portion of the chain corresponds to 391–406 (TSLAMRLPNPRMVAID). Residues 407–427 (FIYGTLAALPLGLLYFLVIIP) traverse the membrane as a helical segment. Over 428–430 (NTQ) the chain is Periplasmic. Residues 431–451 (QSMLLLCISLAVLGFFLGIEV) traverse the membrane as a helical segment. Residues 452 to 458 (QKRRLGS) are Cytoplasmic-facing. Residues 459-479 (MGALASTINIIVLDNPMTFHF) traverse the membrane as a helical segment. The Periplasmic segment spans residues 480–481 (SQ). A helical membrane pass occupies residues 482–502 (FLDSALGQIVGCVLAFTVILL). Over 503-655 (VRDKSRDRTG…HKYQHALTDS (153 aa)) the chain is Cytoplasmic.

This sequence belongs to the aromatic acid exporter ArAE (TC 2.A.85) family.

It is found in the cell inner membrane. Forms an efflux pump with AaeA. Could function as a metabolic relief valve, allowing to eliminate certain compounds when they accumulate to high levels in the cell. In Escherichia coli O6:H1 (strain CFT073 / ATCC 700928 / UPEC), this protein is p-hydroxybenzoic acid efflux pump subunit AaeB.